A 148-amino-acid polypeptide reads, in one-letter code: ATP synthase epsilon chain (148 aa).

Belongs to the ATPase epsilon chain family. As to quaternary structure, F-type ATPases have 2 components, CF(1) - the catalytic core - and CF(0) - the membrane proton channel. CF(1) has five subunits: alpha(3), beta(3), gamma(1), delta(1), epsilon(1). CF(0) has three main subunits: a, b and c.

It localises to the cell membrane. Functionally, produces ATP from ADP in the presence of a proton gradient across the membrane. This chain is ATP synthase epsilon chain, found in Streptococcus thermophilus (strain ATCC BAA-491 / LMD-9).